A 199-amino-acid chain; its full sequence is Streptomycin biosynthesis protein StrG (199 aa).

It participates in antibiotic biosynthesis; streptomycin biosynthesis. In terms of biological role, may be involved in the formation of N-methyl-L-glucosamine. The protein is Streptomycin biosynthesis protein StrG (strG) of Streptomyces griseus.